The primary structure comprises 409 residues: Cobalt-precorrin-5B C(1)-methyltransferase (409 aa).

This sequence belongs to the CbiD family.

It catalyses the reaction Co-precorrin-5B + S-adenosyl-L-methionine = Co-precorrin-6A + S-adenosyl-L-homocysteine. Its pathway is cofactor biosynthesis; adenosylcobalamin biosynthesis; cob(II)yrinate a,c-diamide from sirohydrochlorin (anaerobic route): step 6/10. Its function is as follows. Catalyzes the methylation of C-1 in cobalt-precorrin-5B to form cobalt-precorrin-6A. The protein is Cobalt-precorrin-5B C(1)-methyltransferase of Methanopyrus kandleri (strain AV19 / DSM 6324 / JCM 9639 / NBRC 100938).